The sequence spans 412 residues: Probable tRNA pseudouridine synthase D (412 aa).

Catalysis depends on D97, which acts as the Nucleophile. A TRUD domain is found at A167–Q370.

The protein belongs to the pseudouridine synthase TruD family.

It carries out the reaction uridine(13) in tRNA = pseudouridine(13) in tRNA. In terms of biological role, could be responsible for synthesis of pseudouridine from uracil-13 in transfer RNAs. The protein is Probable tRNA pseudouridine synthase D of Pyrobaculum neutrophilum (strain DSM 2338 / JCM 9278 / NBRC 100436 / V24Sta) (Thermoproteus neutrophilus).